We begin with the raw amino-acid sequence, 341 residues long: L-threonine 3-dehydrogenase (341 aa).

Cysteine 38 contributes to the Zn(2+) binding site. Catalysis depends on charge relay system residues threonine 40 and histidine 43. Zn(2+)-binding residues include histidine 63, glutamate 64, cysteine 93, cysteine 96, cysteine 99, and cysteine 107. Residues isoleucine 175, aspartate 195, arginine 200, 262-264 (LGI), and 286-287 (IY) each bind NAD(+).

This sequence belongs to the zinc-containing alcohol dehydrogenase family. In terms of assembly, homotetramer. Requires Zn(2+) as cofactor.

It localises to the cytoplasm. It carries out the reaction L-threonine + NAD(+) = (2S)-2-amino-3-oxobutanoate + NADH + H(+). It functions in the pathway amino-acid degradation; L-threonine degradation via oxydo-reductase pathway; glycine from L-threonine: step 1/2. In terms of biological role, catalyzes the NAD(+)-dependent oxidation of L-threonine to 2-amino-3-ketobutyrate. In Shewanella woodyi (strain ATCC 51908 / MS32), this protein is L-threonine 3-dehydrogenase.